Here is a 238-residue protein sequence, read N- to C-terminus: Purine nucleoside phosphorylase DeoD-type (238 aa).

Position 4 (His4) interacts with a purine D-ribonucleoside. Phosphate-binding positions include Gly20, Arg24, Arg43, and 87–90; that span reads RVGS. Residues 179–181 and 203–204 each bind a purine D-ribonucleoside; these read EME and SD. Residue Asp204 is the Proton donor of the active site.

Belongs to the PNP/UDP phosphorylase family. As to quaternary structure, homohexamer; trimer of homodimers.

It carries out the reaction a purine D-ribonucleoside + phosphate = a purine nucleobase + alpha-D-ribose 1-phosphate. The catalysed reaction is a purine 2'-deoxy-D-ribonucleoside + phosphate = a purine nucleobase + 2-deoxy-alpha-D-ribose 1-phosphate. Its function is as follows. Catalyzes the reversible phosphorolytic breakdown of the N-glycosidic bond in the beta-(deoxy)ribonucleoside molecules, with the formation of the corresponding free purine bases and pentose-1-phosphate. This is Purine nucleoside phosphorylase DeoD-type from Mannheimia succiniciproducens (strain KCTC 0769BP / MBEL55E).